Consider the following 138-residue polypeptide: Cysteine desulfuration protein SufE (138 aa).

Cys-51 functions as the Cysteine persulfide intermediate in the catalytic mechanism.

It belongs to the SufE family. In terms of assembly, homodimer. Interacts with SufS.

Its subcellular location is the cytoplasm. It participates in cofactor biosynthesis; iron-sulfur cluster biosynthesis. Functionally, participates in cysteine desulfuration mediated by SufS. Cysteine desulfuration mobilizes sulfur from L-cysteine to yield L-alanine and constitutes an essential step in sulfur metabolism for biosynthesis of a variety of sulfur-containing biomolecules. Functions as a sulfur acceptor for SufS, by mediating the direct transfer of the sulfur atom from the S-sulfanylcysteine of SufS, an intermediate product of cysteine desulfuration process. This chain is Cysteine desulfuration protein SufE, found in Photorhabdus laumondii subsp. laumondii (strain DSM 15139 / CIP 105565 / TT01) (Photorhabdus luminescens subsp. laumondii).